The sequence spans 127 residues: Thioredoxin (127 aa).

Positions 2–115 (SDGVKHINSA…LRAAAEKMGR (114 aa)) constitute a Thioredoxin domain. Catalysis depends on nucleophile residues C33 and C36. C33 and C36 are disulfide-bonded.

It belongs to the thioredoxin family.

Its function is as follows. Participates in various redox reactions through the reversible oxidation of its active center dithiol to a disulfide and catalyzes dithiol-disulfide exchange reactions. The polypeptide is Thioredoxin (trx) (Neurospora crassa (strain ATCC 24698 / 74-OR23-1A / CBS 708.71 / DSM 1257 / FGSC 987)).